The chain runs to 518 residues: Glutamate--cysteine ligase (518 aa).

It belongs to the glutamate--cysteine ligase type 1 family. Type 1 subfamily.

The enzyme catalyses L-cysteine + L-glutamate + ATP = gamma-L-glutamyl-L-cysteine + ADP + phosphate + H(+). It participates in sulfur metabolism; glutathione biosynthesis; glutathione from L-cysteine and L-glutamate: step 1/2. In Escherichia fergusonii (strain ATCC 35469 / DSM 13698 / CCUG 18766 / IAM 14443 / JCM 21226 / LMG 7866 / NBRC 102419 / NCTC 12128 / CDC 0568-73), this protein is Glutamate--cysteine ligase.